Consider the following 130-residue polypeptide: uncharacterized protein (130 aa).

The interval 41–64 (DDKDDHMDNQPKTSQTSKKVKLSE) is disordered.

This is an uncharacterized protein from Streptococcus pyogenes serotype M6 (strain ATCC BAA-946 / MGAS10394).